A 315-amino-acid polypeptide reads, in one-letter code: Replication factor C small subunit (315 aa).

43–50 (GSPGVGKT) contacts ATP.

The protein belongs to the activator 1 small subunits family. RfcS subfamily. In terms of assembly, heteromultimer composed of small subunits (RfcS) and large subunits (RfcL).

Its function is as follows. Part of the RFC clamp loader complex which loads the PCNA sliding clamp onto DNA. In Methanococcus maripaludis (strain C7 / ATCC BAA-1331), this protein is Replication factor C small subunit.